We begin with the raw amino-acid sequence, 499 residues long: Increased recombination centers protein 15 (499 aa).

47–56 (DQRASLGGAY) contributes to the FAD binding site.

Belongs to the class-I pyridine nucleotide-disulfide oxidoreductase family.

The protein resides in the cytoplasm. This Saccharomyces cerevisiae (strain ATCC 204508 / S288c) (Baker's yeast) protein is Increased recombination centers protein 15 (IRC15).